A 232-amino-acid chain; its full sequence is Enolase-phosphatase E1 (232 aa).

This sequence belongs to the HAD-like hydrolase superfamily. MasA/MtnC family. As to quaternary structure, monomer. Mg(2+) serves as cofactor.

The enzyme catalyses 5-methylsulfanyl-2,3-dioxopentyl phosphate + H2O = 1,2-dihydroxy-5-(methylsulfanyl)pent-1-en-3-one + phosphate. The protein operates within amino-acid biosynthesis; L-methionine biosynthesis via salvage pathway; L-methionine from S-methyl-5-thio-alpha-D-ribose 1-phosphate: step 3/6. It participates in amino-acid biosynthesis; L-methionine biosynthesis via salvage pathway; L-methionine from S-methyl-5-thio-alpha-D-ribose 1-phosphate: step 4/6. Its function is as follows. Bifunctional enzyme that catalyzes the enolization of 2,3-diketo-5-methylthiopentyl-1-phosphate (DK-MTP-1-P) into the intermediate 2-hydroxy-3-keto-5-methylthiopentenyl-1-phosphate (HK-MTPenyl-1-P), which is then dephosphorylated to form the acireductone 1,2-dihydroxy-3-keto-5-methylthiopentene (DHK-MTPene). In Nocardia farcinica (strain IFM 10152), this protein is Enolase-phosphatase E1.